The chain runs to 128 residues: Transcription antitermination protein NusB (128 aa).

This sequence belongs to the NusB family.

Functionally, involved in transcription antitermination. Required for transcription of ribosomal RNA (rRNA) genes. Binds specifically to the boxA antiterminator sequence of the ribosomal RNA (rrn) operons. The sequence is that of Transcription antitermination protein NusB from Staphylococcus haemolyticus (strain JCSC1435).